The following is a 452-amino-acid chain: Proline--tRNA ligase (452 aa).

Belongs to the class-II aminoacyl-tRNA synthetase family. ProS type 2 subfamily. As to quaternary structure, homodimer.

It localises to the cytoplasm. It catalyses the reaction tRNA(Pro) + L-proline + ATP = L-prolyl-tRNA(Pro) + AMP + diphosphate. Catalyzes the attachment of proline to tRNA(Pro) in a two-step reaction: proline is first activated by ATP to form Pro-AMP and then transferred to the acceptor end of tRNA(Pro). The sequence is that of Proline--tRNA ligase from Jannaschia sp. (strain CCS1).